A 296-amino-acid polypeptide reads, in one-letter code: POM121-like protein 12 (296 aa).

Disordered stretches follow at residues 1-54 (MGAA…SPWP) and 142-162 (APPE…RPAG). A compositionally biased stretch (low complexity) spans 34-52 (SRSPSTPQTTPSPQGRQSP).

It belongs to the POM121 family.

The chain is POM121-like protein 12 (POM121L12) from Homo sapiens (Human).